The sequence spans 362 residues: Histidinol-phosphate aminotransferase (362 aa).

Residue K219 is modified to N6-(pyridoxal phosphate)lysine.

The protein belongs to the class-II pyridoxal-phosphate-dependent aminotransferase family. Histidinol-phosphate aminotransferase subfamily. As to quaternary structure, homodimer. Requires pyridoxal 5'-phosphate as cofactor.

It carries out the reaction L-histidinol phosphate + 2-oxoglutarate = 3-(imidazol-4-yl)-2-oxopropyl phosphate + L-glutamate. It participates in amino-acid biosynthesis; L-histidine biosynthesis; L-histidine from 5-phospho-alpha-D-ribose 1-diphosphate: step 7/9. The protein is Histidinol-phosphate aminotransferase of Maricaulis maris (strain MCS10) (Caulobacter maris).